A 75-amino-acid chain; its full sequence is SPbeta prophage-derived uncharacterized protein YomT (75 aa).

This Bacillus subtilis (strain 168) protein is SPbeta prophage-derived uncharacterized protein YomT (yomT).